Consider the following 194-residue polypeptide: [Ribosomal protein uS5]-alanine N-acetyltransferase (194 aa).

The N-acetyltransferase domain maps to leucine 18–proline 188.

This sequence belongs to the acetyltransferase family. RimJ subfamily.

The protein resides in the cytoplasm. The enzyme catalyses N-terminal L-alanyl-[ribosomal protein uS5] + acetyl-CoA = N-terminal N(alpha)-acetyl-L-alanyl-[ribosomal protein uS5] + CoA + H(+). Acetylates the N-terminal alanine of ribosomal protein uS5. The protein is [Ribosomal protein uS5]-alanine N-acetyltransferase (rimJ) of Shigella flexneri.